The primary structure comprises 828 residues: Protein ELFN1 (828 aa).

The signal sequence occupies residues 1-25; sequence MAGHGWGTAWVLVAAATLLHAGGLA. Topologically, residues 26-418 are extracellular; that stretch reads QGDCWLIEGD…VPSPSTATHY (393 aa). LRR repeat units lie at residues 61–82, 85–106, 109–130, 133–154, and 157–178; these read TIVDLRLNENRIRSVQYASLSR, NLTYLNLTKNEIGYIEDGAFSG, NLQVLQLGYNRLRNLTEGMLRG, KLEYLYLQANLIEVVMASAFWE, and NIVNIDLSMNRIQQLGSGTFAG. N-linked (GlcNAc...) asparagine glycans are attached at residues Asn85, Asn90, and Asn122. One can recognise an LRRCT domain in the interval 190–253; it reads NPFYCSCELL…LSKLQSVCTE (64 aa). N-linked (GlcNAc...) asparagine glycosylation is present at Asn210. The interval 258 to 293 is disordered; the sequence is AEVLGPPRPVPGRSQPGHSPPPPPPEPSDMPCADDE. Over residues 275–285 the composition is skewed to pro residues; that stretch reads HSPPPPPPEPS. The 88-residue stretch at 312–399 folds into the Fibronectin type-III domain; sequence QTEARPSMKV…HNHTCLTICL (88 aa). Asn376 is a glycosylation site (N-linked (GlcNAc...) asparagine). The helical transmembrane segment at 419–439 threads the bilayer; it reads IMTILGCLFGMVLVLGAVYYC. The Cytoplasmic segment spans residues 440–828; sequence LRKRRRQEEK…WKGVSAQHKS (389 aa). Phosphoserine occurs at positions 460 and 646. 2 disordered regions span residues 627–674 and 697–731; these read HHSV…IEKS and KSRQYGEHRHSYPGSHPAEPPAPPPPPPTHEGLGG. Low complexity predominate over residues 638-652; that stretch reads RASTSSSGSARSPRT. The segment covering 697–706 has biased composition (basic and acidic residues); sequence KSRQYGEHRH. A compositionally biased stretch (pro residues) spans 714-725; that stretch reads AEPPAPPPPPPT.

Interacts with PPP1CA. In terms of tissue distribution, selectively expressed in perialvear somatostatin (Sst)-containing interneurons.

The protein localises to the membrane. The protein resides in the cell projection. It is found in the dendrite. Functionally, postsynaptic protein that regulates circuit dynamics in the central nervous system by modulating the temporal dynamics of interneuron recruitment. Specifically present in excitatory synapses onto oriens-lacunosum molecular (OLM) interneurons and acts as a regulator of presynaptic release probability to direct the formation of highly facilitating pyramidal-OLM synapses. Inhibits phosphatase activity of protein phosphatase 1 (PP1) complexes. This is Protein ELFN1 (Elfn1) from Mus musculus (Mouse).